Reading from the N-terminus, the 597-residue chain is Large ribosomal subunit assembly factor BipA (597 aa).

The tr-type G domain maps to 3–198 (LPIRNVAIIA…AILHHVPPPA (196 aa)). GTP-binding positions include 15-20 (DHGKTT) and 128-131 (NKID).

The protein belongs to the TRAFAC class translation factor GTPase superfamily. Classic translation factor GTPase family. BipA subfamily. In terms of assembly, monomer.

Its subcellular location is the cytoplasm. It catalyses the reaction GTP + H2O = GDP + phosphate + H(+). Its function is as follows. A 50S ribosomal subunit assembly protein with GTPase activity, required for 50S subunit assembly at low temperatures, may also play a role in translation. Binds GTP and analogs. Binds the 70S ribosome between the 30S and 50S subunits, in a similar position as ribosome-bound EF-G; it contacts a number of ribosomal proteins, both rRNAs and the A-site tRNA. The polypeptide is Large ribosomal subunit assembly factor BipA (Synechocystis sp. (strain ATCC 27184 / PCC 6803 / Kazusa)).